Reading from the N-terminus, the 2144-residue chain is HEAT repeat-containing protein 1 (2144 aa).

The residue at position 1 (Met-1) is an N-acetylmethionine. Thr-2 is subject to N-acetylthreonine; in HEAT repeat-containing protein 1, N-terminally processed. Position 516 is a phosphoserine (Ser-516). Residues Ala-913 to Pro-951 form an HEAT 1 repeat. Residues Lys-1170–Gln-1191 are disordered. Ser-1190 is subject to Phosphoserine. One copy of the HEAT 2 repeat lies at Asn-1347 to Asp-1385. Ser-1492 is subject to Phosphoserine. HEAT repeat units follow at residues Leu-1594–Ser-1632, Ile-1730–Thr-1770, and Ile-2100–Glu-2138.

Belongs to the HEATR1/UTP10 family. In terms of assembly, part of the small subunit (SSU) processome, composed of more than 70 proteins and the RNA chaperone small nucleolar RNA (snoRNA) U3. Interacts with MYC; the interaction is required for localization of MYC to the nucleolus.

Its subcellular location is the nucleus. It localises to the nucleolus. Functionally, ribosome biogenesis factor; required for recruitment of Myc to nucleoli. Involved in nucleolar processing of pre-18S ribosomal RNA. Required for optimal pre-ribosomal RNA transcription by RNA polymerase I. Part of the small subunit (SSU) processome, first precursor of the small eukaryotic ribosomal subunit. During the assembly of the SSU processome in the nucleolus, many ribosome biogenesis factors, an RNA chaperone and ribosomal proteins associate with the nascent pre-rRNA and work in concert to generate RNA folding, modifications, rearrangements and cleavage as well as targeted degradation of pre-ribosomal RNA by the RNA exosome. Involved in neuronal-lineage cell proliferation. The polypeptide is HEAT repeat-containing protein 1 (Homo sapiens (Human)).